Reading from the N-terminus, the 260-residue chain is Indole-3-glycerol phosphate synthase (260 aa).

It belongs to the TrpC family.

It catalyses the reaction 1-(2-carboxyphenylamino)-1-deoxy-D-ribulose 5-phosphate + H(+) = (1S,2R)-1-C-(indol-3-yl)glycerol 3-phosphate + CO2 + H2O. It participates in amino-acid biosynthesis; L-tryptophan biosynthesis; L-tryptophan from chorismate: step 4/5. In Neisseria gonorrhoeae (strain ATCC 700825 / FA 1090), this protein is Indole-3-glycerol phosphate synthase.